Here is a 132-residue protein sequence, read N- to C-terminus: MSSRREIRWGIAHIYASQNNTLLTISDLTGAEIISRASGGMVVKADREKSSPYAAMLAANKAASDALEKGIMALHIKVRAPGGYGSKTPGPGAQPAIRALARAGFIIGRIEDVTPIPHDTIRRPGGRRGRRV.

It belongs to the universal ribosomal protein uS11 family. In terms of assembly, part of the 30S ribosomal subunit.

Its function is as follows. Located on the platform of the 30S subunit. This chain is Small ribosomal subunit protein uS11, found in Saccharolobus solfataricus (strain ATCC 35092 / DSM 1617 / JCM 11322 / P2) (Sulfolobus solfataricus).